We begin with the raw amino-acid sequence, 94 residues long: UPF0298 protein SZO_03600 (94 aa).

This sequence belongs to the UPF0298 family.

The protein localises to the cytoplasm. The sequence is that of UPF0298 protein SZO_03600 from Streptococcus equi subsp. zooepidemicus (strain H70).